The primary structure comprises 485 residues: MTIRYESVENLINLIKNKEITPSKVVSDIYDAIEETDPTIKSFLALDKENAIKKAQELDELQAKDQMEGKLFGIPMGIKDNIITEGVETTCASKMLEGFVPIYESTVMNKLRNEQAVLIGKLNMDEFAMGGSTETSYYKKTVNPFDHTAVPGGSSGGSAAAVAAGLVPFSLGSDTGGSIRQPAAYCGIVGLKPTYGRVSRFGLVAFASSLDQIGPLTRTVKDNALVLEAITGVDENDSTSAPVEDADYTSDIGKDIKGLKIALPSEYLGEGVSDEVKASVKEAVETLRGLGATVEEVSLPNTKYGIPSYYVIASSEASSNLSRFDGIRYGYHSPEANSLEELYKMSRSEGFGEEVKRRIFLGTFALSSGYYDAFYKKSQKVRTLIKDDFNRIFENYDVVVGPTTPTTAFNLGDEIDDPLTMYANDLLTTPVNLAGLPGISVPCGQSNGRPIGLQFIGKPFDEKTLYRVAYQYETKFNFHNEYEKL.

Residues K79 and S154 each act as charge relay system in the active site. Residue S178 is the Acyl-ester intermediate of the active site.

It belongs to the amidase family. GatA subfamily. In terms of assembly, heterotrimer of A, B and C subunits.

The enzyme catalyses L-glutamyl-tRNA(Gln) + L-glutamine + ATP + H2O = L-glutaminyl-tRNA(Gln) + L-glutamate + ADP + phosphate + H(+). Its function is as follows. Allows the formation of correctly charged Gln-tRNA(Gln) through the transamidation of misacylated Glu-tRNA(Gln) in organisms which lack glutaminyl-tRNA synthetase. The reaction takes place in the presence of glutamine and ATP through an activated gamma-phospho-Glu-tRNA(Gln). This Staphylococcus saprophyticus subsp. saprophyticus (strain ATCC 15305 / DSM 20229 / NCIMB 8711 / NCTC 7292 / S-41) protein is Glutamyl-tRNA(Gln) amidotransferase subunit A.